A 229-amino-acid polypeptide reads, in one-letter code: Potassium/proton antiporter CemA (229 aa).

4 helical membrane passes run 7 to 27, 114 to 134, 154 to 174, and 189 to 209; these read FTPLLYLASIVFLPWWISLSF, LICFVILSGYSILGNEELLIL, ILLLTDLCIGFHSPHGWELMI, and IISGLVSTFPVILDTIFKYWI.

It belongs to the CemA family.

Its subcellular location is the plastid. The protein resides in the chloroplast inner membrane. The catalysed reaction is K(+)(in) + H(+)(out) = K(+)(out) + H(+)(in). Contributes to K(+)/H(+) antiport activity by supporting proton efflux to control proton extrusion and homeostasis in chloroplasts in a light-dependent manner to modulate photosynthesis. Prevents excessive induction of non-photochemical quenching (NPQ) under continuous-light conditions. Indirectly promotes efficient inorganic carbon uptake into chloroplasts. The protein is Potassium/proton antiporter CemA of Gossypium hirsutum (Upland cotton).